Reading from the N-terminus, the 398-residue chain is tRNA pseudouridine synthase D (398 aa).

The Nucleophile role is filled by D76. Positions 151–361 constitute a TRUD domain; it reads GVPNRFGVQR…MEGERRPLRV (211 aa).

It belongs to the pseudouridine synthase TruD family.

It catalyses the reaction uridine(13) in tRNA = pseudouridine(13) in tRNA. Responsible for synthesis of pseudouridine from uracil-13 in transfer RNAs. The chain is tRNA pseudouridine synthase D from Geobacter sp. (strain M21).